The primary structure comprises 1024 residues: Protein translocase subunit SecA (1024 aa).

Residues Gln143, Gly161–Thr165, and Asp661 contribute to the ATP site. Residues His970–Ala1024 form a disordered region. 4 residues coordinate Zn(2+): Cys1008, Cys1010, Cys1019, and His1020. The span at Lys1014–Ala1024 shows a compositional bias: basic residues.

This sequence belongs to the SecA family. As to quaternary structure, monomer and homodimer. Part of the essential Sec protein translocation apparatus which comprises SecA, SecYEG and auxiliary proteins SecDF. Other proteins may also be involved. Zn(2+) is required as a cofactor.

It localises to the cell inner membrane. It is found in the cytoplasm. The catalysed reaction is ATP + H2O + cellular proteinSide 1 = ADP + phosphate + cellular proteinSide 2.. In terms of biological role, part of the Sec protein translocase complex. Interacts with the SecYEG preprotein conducting channel. Has a central role in coupling the hydrolysis of ATP to the transfer of proteins into and across the cell membrane, serving as an ATP-driven molecular motor driving the stepwise translocation of polypeptide chains across the membrane. This Chlorobium luteolum (strain DSM 273 / BCRC 81028 / 2530) (Pelodictyon luteolum) protein is Protein translocase subunit SecA.